A 286-amino-acid chain; its full sequence is Bifunctional protein FolD (286 aa).

NADP(+) is bound by residues 166-168 (GAS) and I232.

This sequence belongs to the tetrahydrofolate dehydrogenase/cyclohydrolase family. As to quaternary structure, homodimer.

The catalysed reaction is (6R)-5,10-methylene-5,6,7,8-tetrahydrofolate + NADP(+) = (6R)-5,10-methenyltetrahydrofolate + NADPH. It carries out the reaction (6R)-5,10-methenyltetrahydrofolate + H2O = (6R)-10-formyltetrahydrofolate + H(+). It functions in the pathway one-carbon metabolism; tetrahydrofolate interconversion. In terms of biological role, catalyzes the oxidation of 5,10-methylenetetrahydrofolate to 5,10-methenyltetrahydrofolate and then the hydrolysis of 5,10-methenyltetrahydrofolate to 10-formyltetrahydrofolate. The sequence is that of Bifunctional protein FolD from Blochmanniella pennsylvanica (strain BPEN).